The chain runs to 141 residues: Large ribosomal subunit protein uL16 (141 aa).

A compositionally biased stretch (basic residues) spans 1–19; the sequence is MLMPKKTKYRKQQKGRNRG. The interval 1–22 is disordered; the sequence is MLMPKKTKYRKQQKGRNRGKAY.

It belongs to the universal ribosomal protein uL16 family. Part of the 50S ribosomal subunit.

Functionally, binds 23S rRNA and is also seen to make contacts with the A and possibly P site tRNAs. The sequence is that of Large ribosomal subunit protein uL16 from Nitratiruptor sp. (strain SB155-2).